Here is a 131-residue protein sequence, read N- to C-terminus: UPF0102 protein YraN (131 aa).

The segment covering Met-1 to Thr-19 has biased composition (polar residues). The segment at Met-1–Gly-20 is disordered.

It belongs to the UPF0102 family.

In Shigella boydii serotype 18 (strain CDC 3083-94 / BS512), this protein is UPF0102 protein YraN.